The primary structure comprises 253 residues: CENP-A recruiting complex protein mis20 (253 aa).

The disordered stretch occupies residues 113–136 (TGPTTSKNKHPSHSNTIRSPPYKV).

In terms of assembly, component of the CENP-A recruiting complex composed of at least mis16, mis19, mis19 and mis20.

The protein localises to the cytoplasm. It localises to the cytoskeleton. The protein resides in the microtubule organizing center. It is found in the spindle pole body. Its subcellular location is the chromosome. The protein localises to the centromere. Functionally, component of the CENP-A recruiting complex that ensures the integrity of mitotic spindles through maintenance of kinetochore factors mis6/CENP-I and cnp1/CENP-A. Seems dispensable for proper chromosome segregation. The chain is CENP-A recruiting complex protein mis20 from Schizosaccharomyces pombe (strain 972 / ATCC 24843) (Fission yeast).